The chain runs to 425 residues: Polyadenylate-binding protein RBP47B' (425 aa).

RRM domains are found at residues 24-102 (RTLW…LNWA), 116-195 (HSIF…AATP), and 237-309 (TTIS…WSKN).

Belongs to the polyadenylate-binding RBP47 family. Interacts with the poly(A) tail of mRNA in nucleus.

Its subcellular location is the nucleus. The protein localises to the cytoplasmic granule. Functionally, heterogeneous nuclear ribonucleoprotein (hnRNP)-protein binding the poly(A) tail of mRNA and probably involved in some steps of pre-mRNA maturation. This is Polyadenylate-binding protein RBP47B' (RBP47B') from Arabidopsis thaliana (Mouse-ear cress).